A 620-amino-acid chain; its full sequence is Zinc finger protein GLIS1 (620 aa).

The tract at residues 108-132 (PLTGDLGGPSKRARPGPASTDSHEG) is disordered. The C2H2-type 1 zinc-finger motif lies at 195-220 (QACRWVDCCAAYEQQEELVRHIEKSH). The C2H2-type 2; atypical zinc-finger motif lies at 229-256 (FTCFWAGCVRRYKPFNARYKLLIHMRVH). C2H2-type zinc fingers lie at residues 262–286 (NKCM…LRSH), 292–316 (YLCQ…QRTH), and 322–346 (YACQ…VKAH). The Bipartite nuclear localization signal signature appears at 340 to 356 (RKHVKAHSAKEQQVRKK). Positions 414–515 (ASGLLPPAHD…PPLPSPQGYQ (102 aa)) are disordered. Residues 477–488 (SSQSHSPGGQPF) show a composition bias toward low complexity. The segment covering 489–510 (PTLPSKPSYPPFQSPPPPPLPS) has biased composition (pro residues).

The protein belongs to the GLI C2H2-type zinc-finger protein family. Interacts with KLF4. Interacts with POU5F1 and/or POU5F1B. Interacts with SOX2.

The protein localises to the nucleus. Functionally, acts both as a repressor and an activator of transcription. Binds to the consensus sequence 5'-GACCACCCAC-3'. By controlling the expression of genes involved in cell differentiation inhibits the lineage commitment of multipotent cells. Prevents, for instance, the differentiation of multipotent mesenchymal cells into adipocyte and osteoblast. In Homo sapiens (Human), this protein is Zinc finger protein GLIS1.